The primary structure comprises 568 residues: Phosphoribosylaminoimidazole carboxylase (568 aa).

The 189-residue stretch at 110-298 folds into the ATP-grasp domain; that stretch reads KNHLIKHDVA…QFEAHVRAVT (189 aa). ATP is bound at residue 138–193; it reads GEKFGYPYMLKSRTLAYDGRGNFVVKDKSYCEKALEFLKDRPLYAEKWCPFTKELA.

This sequence in the C-terminal section; belongs to the AIR carboxylase family. Class I subfamily.

It carries out the reaction 5-amino-1-(5-phospho-D-ribosyl)imidazole-4-carboxylate + H(+) = 5-amino-1-(5-phospho-beta-D-ribosyl)imidazole + CO2. It functions in the pathway purine metabolism; IMP biosynthesis via de novo pathway; 5-amino-1-(5-phospho-D-ribosyl)imidazole-4-carboxylate from 5-amino-1-(5-phospho-D-ribosyl)imidazole (carboxylase route): step 1/1. This chain is Phosphoribosylaminoimidazole carboxylase (ADE2), found in Candida albicans (strain SC5314 / ATCC MYA-2876) (Yeast).